The following is a 249-amino-acid chain: Triosephosphate isomerase (249 aa).

9–11 is a substrate binding site; the sequence is NWK. H94 (electrophile) is an active-site residue. E166 functions as the Proton acceptor in the catalytic mechanism. Substrate is bound by residues G172, S211, and 232–233; that span reads GG.

Belongs to the triosephosphate isomerase family. Homodimer.

The protein localises to the cytoplasm. The enzyme catalyses D-glyceraldehyde 3-phosphate = dihydroxyacetone phosphate. It participates in carbohydrate biosynthesis; gluconeogenesis. The protein operates within carbohydrate degradation; glycolysis; D-glyceraldehyde 3-phosphate from glycerone phosphate: step 1/1. Involved in the gluconeogenesis. Catalyzes stereospecifically the conversion of dihydroxyacetone phosphate (DHAP) to D-glyceraldehyde-3-phosphate (G3P). The sequence is that of Triosephosphate isomerase from Chromohalobacter salexigens (strain ATCC BAA-138 / DSM 3043 / CIP 106854 / NCIMB 13768 / 1H11).